The primary structure comprises 225 residues: MGEYYKNKLLLRPSVYSDNIQKIKLVAYEYGKLHAKYPLSVIGIMKTIDDKFVLCHRYNSFLFSEIAFTKDKRRKIRLFKKYSKYMSNIERDILSYKLSLPNNYNTNHIDIIFPGGKIKDLESITNCLVREIKEELNIDSSYLAICKNCFVYGSIYDRLIDKDFEVIALYVETDLTSRQILNRFIPNREIKGISFIDARDINKDYLYTNVIKYIINAVRTSASNS.

Residues 35-218 (AKYPLSVIGI…NVIKYIINAV (184 aa)) enclose the Nudix hydrolase domain. The Nudix box motif lies at 116–137 (GKIKDLESITNCLVREIKEELN). E122 provides a ligand contact to Mg(2+). Residue E131 is the Nucleophile of the active site. Residue E135 participates in Mn(2+) binding. D157 is a Mg(2+) binding site.

Belongs to the Nudix hydrolase family. Mg(2+) serves as cofactor. Requires Mn(2+) as cofactor.

Its function is as follows. Decapping enzyme required for the removal of the 5'-end m7GpppN cap tethered to viral and host mRNAs to allow their decay in cells. May therefore accelerate viral and cellular mRNA turnover to eliminate competing host mRNAs and allow stage-specific synthesis of viral proteins. Acceleration of the turnover of cellular transcripts may even promote the shutoff of host protein synthesis. The sequence is that of mRNA-decapping protein D10 from Fowlpox virus (strain NVSL) (FPV).